Here is a 182-residue protein sequence, read N- to C-terminus: Pentatricopeptide repeat-containing protein At2g01360 (182 aa).

PPR repeat units follow at residues 30–64 (EKSA…QHSL), 65–95 (GVYH…LPDD), and 98–132 (GLSA…EIMP).

It belongs to the PPR family. P subfamily.

The chain is Pentatricopeptide repeat-containing protein At2g01360 from Arabidopsis thaliana (Mouse-ear cress).